Here is a 205-residue protein sequence, read N- to C-terminus: Ferritin heavy chain (205 aa).

Positions 1–19 (MVKLIASLLLLAVVAQAYG) are cleaved as a signal peptide. The Ferritin-like diiron domain occupies 35 to 190 (VDMKDACIKG…GKLTTLKKMM (156 aa)). A disulfide bridge links Cys-41 with Cys-150. Glu-52, Glu-87, His-90, Glu-136, and Gln-172 together coordinate Fe cation.

It belongs to the ferritin family. As to quaternary structure, oligomer of 12 light (L) chains and 12 heavy (H) chains; L and H chains are disulfide-linked. The functional molecule forms a roughly spherical shell with a diameter of 12 nm and contains a central cavity into which the insoluble ferric iron core is deposited. As to expression, expressed in hemolymph and gut (at protein level). Expressed in the head (at protein level). Expressed in thorax and abdomen.

Its subcellular location is the golgi apparatus. It localises to the secreted. The enzyme catalyses 4 Fe(2+) + O2 + 4 H(+) = 4 Fe(3+) + 2 H2O. Its function is as follows. Stores iron in a soluble, non-toxic, readily available form. Important for iron homeostasis. Iron is taken up in the ferrous form and deposited as ferric hydroxides after oxidation. Ferritin is composed of a heavy (H) chain which is responsible for the oxidation and uptake of ferrous iron, and a light (L) chain which facilitates the nucleation of the ferrihydrite iron core. Required for dietary iron absorption in the midgut. Involved in tissue iron detoxification by exporting excess iron. Functions as an antioxidant and protects the developing organs from cell-mediated ferroptosis. Required for embryo and larval development. Plays a role in blood cell (haemocyte) differentiation in the lymph gland at the larval stage. May also store Zn(2+) and Mn(2+) and thus may play a role in zinc and manganese homeostasis. The sequence is that of Ferritin heavy chain from Drosophila melanogaster (Fruit fly).